The primary structure comprises 409 residues: Aspartic protease pepA (409 aa).

Positions 1–19 are cleaved as a signal peptide; the sequence is MPSIVSLTAALTFVGAVIA. A propeptide spans 20–65 (activation peptide); sequence SPVEKRSAFSVEQVPHTTYLKNGPAQKVKTLRKYGKPVPQSLLDAA. A Peptidase A1 domain is found at 97-404; sequence YLSPVTVGST…PDSPPRIGLA (308 aa). Catalysis depends on residues D113 and D293. A disulfide bridge links C329 with C364. The N-linked (GlcNAc...) asparagine glycan is linked to N335.

This sequence belongs to the peptidase A1 family. Monomer.

It is found in the secreted. In terms of biological role, secreted aspartic endopeptidase that allows assimilation of proteinaceous substrates. The scissile peptide bond is attacked by a nucleophilic water molecule activated by two aspartic residues in the active site. Shows a broad primary substrate specificity. Favors hydrophobic residues at the P1 and P1' positions. The sequence is that of Aspartic protease pepA from Leptosphaeria maculans (strain JN3 / isolate v23.1.3 / race Av1-4-5-6-7-8) (Blackleg fungus).